A 483-amino-acid polypeptide reads, in one-letter code: Glutamyl-tRNA(Gln) amidotransferase subunit A (483 aa).

Active-site charge relay system residues include Lys-76 and Ser-151. Catalysis depends on Ser-175, which acts as the Acyl-ester intermediate.

Belongs to the amidase family. GatA subfamily. Heterotrimer of A, B and C subunits.

It carries out the reaction L-glutamyl-tRNA(Gln) + L-glutamine + ATP + H2O = L-glutaminyl-tRNA(Gln) + L-glutamate + ADP + phosphate + H(+). Functionally, allows the formation of correctly charged Gln-tRNA(Gln) through the transamidation of misacylated Glu-tRNA(Gln) in organisms which lack glutaminyl-tRNA synthetase. The reaction takes place in the presence of glutamine and ATP through an activated gamma-phospho-Glu-tRNA(Gln). The polypeptide is Glutamyl-tRNA(Gln) amidotransferase subunit A (Nitrosococcus oceani (strain ATCC 19707 / BCRC 17464 / JCM 30415 / NCIMB 11848 / C-107)).